The sequence spans 230 residues: Ribosomal RNA small subunit methyltransferase G (230 aa).

S-adenosyl-L-methionine contacts are provided by residues Gly93, Leu98, 144–145 (IE), and Arg158.

This sequence belongs to the methyltransferase superfamily. RNA methyltransferase RsmG family.

The protein resides in the cytoplasm. It catalyses the reaction guanosine(527) in 16S rRNA + S-adenosyl-L-methionine = N(7)-methylguanosine(527) in 16S rRNA + S-adenosyl-L-homocysteine. Specifically methylates the N7 position of guanine in position 527 of 16S rRNA. The polypeptide is Ribosomal RNA small subunit methyltransferase G (Bordetella parapertussis (strain 12822 / ATCC BAA-587 / NCTC 13253)).